Here is a 250-residue protein sequence, read N- to C-terminus: MSEKIQKILSHLGYGSRRNIENMIKFGDISINGKKIVIGQRLNNKNIEVITIKGETVSIKKTDFKTKIIIYNKPEGEICTRNDYKKRPIVFDKLPLLNIHRWISIGRLDINTRGLLLFTNNGNLANELMHPSNKIEREYYIRVFGKINKNTMNILKNGVKIKDGNAAFKSIQTIDHACSKKNKWFKGVLCEGRNREIRSMWQAVQCQVSRLIRIRYGNIFLPKNLKLGDWSELSSESVNNLSNLVSLKDS.

The S4 RNA-binding domain maps to 3 to 73 (EKIQKILSHL…FKTKIIIYNK (71 aa)). Asp-109 (nucleophile) is an active-site residue.

Belongs to the pseudouridine synthase RsuA family.

The catalysed reaction is uridine(2605) in 23S rRNA = pseudouridine(2605) in 23S rRNA. Responsible for synthesis of pseudouridine from uracil-2605 in 23S ribosomal RNA. This chain is Ribosomal large subunit pseudouridine synthase B (rluB), found in Buchnera aphidicola subsp. Acyrthosiphon pisum (strain APS) (Acyrthosiphon pisum symbiotic bacterium).